The chain runs to 178 residues: Large ribosomal subunit protein uL30 (178 aa).

This sequence belongs to the universal ribosomal protein uL30 family. Part of the 50S ribosomal subunit.

The polypeptide is Large ribosomal subunit protein uL30 (Pyrobaculum aerophilum (strain ATCC 51768 / DSM 7523 / JCM 9630 / CIP 104966 / NBRC 100827 / IM2)).